The primary structure comprises 20 residues: U1-poneritoxin-Ni1a (20 aa).

Lys-20 carries the lysine amide modification.

Belongs to the non-disulfide-bridged peptide (NDBP) superfamily. Medium-length antimicrobial peptide (group 3) family. Ponericin-W subfamily. In terms of tissue distribution, expressed by the venom gland.

The protein resides in the secreted. Its subcellular location is the target cell membrane. Functionally, has activity against Gram-positive bacteria. Has insecticidal and hemolytic activities. May act by disrupting the integrity of the bacterial cell membrane. The sequence is that of U1-poneritoxin-Ni1a from Neoponera inversa (Ant).